Here is a 463-residue protein sequence, read N- to C-terminus: L-2-hydroxyglutarate dehydrogenase, mitochondrial (463 aa).

Residues 1 to 51 constitute a mitochondrion transit peptide; that stretch reads MVPALRYLVGACGRARGLFAGGSPGACGFASGRPRPLCGGSRSASTSSFDI. An N6-acetyllysine mark is found at K104, K155, and K173.

Belongs to the L2HGDH family. It depends on FAD as a cofactor. Widely expressed. Highly expressed in brain, testis and muscle. Expressed to a lower extent in lymphocytes, fibroblasts, keratinocytes, placenta, bladder, small intestine, liver and bone marrow.

It localises to the mitochondrion. It catalyses the reaction (S)-2-hydroxyglutarate + A = 2-oxoglutarate + AH2. The chain is L-2-hydroxyglutarate dehydrogenase, mitochondrial (L2HGDH) from Homo sapiens (Human).